A 266-amino-acid polypeptide reads, in one-letter code: MSEPEVTYSTVRLHKSSRLQKLVRHEETQGPREAGYRKCSVCWQLIVKALGILCFLLLITVAVLAVKIFQYGQHNQEIHETLNYHHNCSNMQSDFNLKEEMLTNRSIDSRPGNELLESLNREQNRGYSETKTDLDSSQDTGTGVKYWFCYRTKCYYFIMNKNTWSGCKQNCQHYSLPLVKIDDENELKFLQFQVIPDSYWIGLSYDKEKKEWAWIDNGQSKLDMKIRKMNFKPGGCVFLSKRRLEDTNCKNSHYCICGKKLDKFPH.

The Cytoplasmic segment spans residues 1-44 (MSEPEVTYSTVRLHKSSRLQKLVRHEETQGPREAGYRKCSVCWQ). The chain crosses the membrane as a helical; Signal-anchor for type II membrane protein span at residues 45–66 (LIVKALGILCFLLLITVAVLAV). Residues 67 to 266 (KIFQYGQHNQ…CGKKLDKFPH (200 aa)) are Extracellular-facing. N-linked (GlcNAc...) asparagine glycosylation is found at N87 and N104. The 119-residue stretch at 143 to 261 (GVKYWFCYRT…SHYCICGKKL (119 aa)) folds into the C-type lectin domain. 4 disulfides stabilise this stretch: C149–C154, C167–C255, C171–C257, and C236–C249.

In terms of assembly, homodimer; disulfide-linked.

It is found in the membrane. Its function is as follows. Receptor on natural killer (NK) cells for class I MHC. The chain is Killer cell lectin-like receptor 6 (Klra6) from Mus musculus (Mouse).